The sequence spans 258 residues: Indole-3-glycerol phosphate synthase (258 aa).

It belongs to the TrpC family.

The catalysed reaction is 1-(2-carboxyphenylamino)-1-deoxy-D-ribulose 5-phosphate + H(+) = (1S,2R)-1-C-(indol-3-yl)glycerol 3-phosphate + CO2 + H2O. Its pathway is amino-acid biosynthesis; L-tryptophan biosynthesis; L-tryptophan from chorismate: step 4/5. This Campylobacter jejuni subsp. doylei (strain ATCC BAA-1458 / RM4099 / 269.97) protein is Indole-3-glycerol phosphate synthase.